A 442-amino-acid chain; its full sequence is Protoheme IX farnesyltransferase (442 aa).

A unknown region spans residues 1 to 167 (MGVYSLLVLG…AYVQLMKPRL (167 aa)). Helical transmembrane passes span 49–69 (AAAL…RTGA), 76–96 (AVTL…YTAM), 106–126 (VHLT…AWTL), 167–187 (LMWL…SQLG), 194–214 (AATV…SGTF), 245–265 (LAFG…VNLL), 267–287 (AVLG…VLKP), 308–328 (WVAV…VIFL), 365–385 (HIVY…ELTG), 386–406 (LGPL…YFAI), and 421–441 (FHAS…DTMV). Residues 168-439 (MWLLCLVAGA…CLLVAVVLDT (272 aa)) form a prenyltransferase region.

In the C-terminal section; belongs to the UbiA prenyltransferase family. Protoheme IX farnesyltransferase subfamily.

The protein localises to the cell membrane. The enzyme catalyses heme b + (2E,6E)-farnesyl diphosphate + H2O = Fe(II)-heme o + diphosphate. It functions in the pathway porphyrin-containing compound metabolism; heme O biosynthesis; heme O from protoheme: step 1/1. In terms of biological role, converts heme B (protoheme IX) to heme O by substitution of the vinyl group on carbon 2 of heme B porphyrin ring with a hydroxyethyl farnesyl side group. The protein is Protoheme IX farnesyltransferase (ctaB) of Halobacterium salinarum (strain ATCC 700922 / JCM 11081 / NRC-1) (Halobacterium halobium).